Here is a 185-residue protein sequence, read N- to C-terminus: Elongation factor P (185 aa).

It belongs to the elongation factor P family.

Its subcellular location is the cytoplasm. It participates in protein biosynthesis; polypeptide chain elongation. In terms of biological role, involved in peptide bond synthesis. Stimulates efficient translation and peptide-bond synthesis on native or reconstituted 70S ribosomes in vitro. Probably functions indirectly by altering the affinity of the ribosome for aminoacyl-tRNA, thus increasing their reactivity as acceptors for peptidyl transferase. The polypeptide is Elongation factor P (efp) (Nostoc sp. (strain PCC 7120 / SAG 25.82 / UTEX 2576)).